Reading from the N-terminus, the 470-residue chain is Ribulose bisphosphate carboxylase large chain (470 aa).

Asn115 and Thr165 together coordinate substrate. Lys167 functions as the Proton acceptor in the catalytic mechanism. Substrate is bound at residue Lys169. Residues Lys193, Asp195, and Glu196 each coordinate Mg(2+). Residue Lys193 is modified to N6-carboxylysine. The active-site Proton acceptor is His286. 3 residues coordinate substrate: Arg287, His319, and Ser371.

The protein belongs to the RuBisCO large chain family. Type I subfamily. Heterohexadecamer of 8 large chains and 8 small chains. Mg(2+) is required as a cofactor.

Its subcellular location is the carboxysome. The enzyme catalyses 2 (2R)-3-phosphoglycerate + 2 H(+) = D-ribulose 1,5-bisphosphate + CO2 + H2O. The catalysed reaction is D-ribulose 1,5-bisphosphate + O2 = 2-phosphoglycolate + (2R)-3-phosphoglycerate + 2 H(+). Functionally, ruBisCO catalyzes two reactions: the carboxylation of D-ribulose 1,5-bisphosphate, the primary event in carbon dioxide fixation, as well as the oxidative fragmentation of the pentose substrate in the photorespiration process. Both reactions occur simultaneously and in competition at the same active site. The polypeptide is Ribulose bisphosphate carboxylase large chain (Prochlorococcus marinus (strain MIT 9303)).